The following is an 892-amino-acid chain: E3 ubiquitin ligase PQT3-like (892 aa).

A DWNN domain is found at 3-76 (IYYKFKSARD…NTSVLIRRVP (74 aa)). Residues 210–224 (CHRCNIPGHFIQHCP) form a CCHC-type zinc finger. Ser-285 is subject to Phosphoserine. The segment at 295–333 (CPLCKEVMKDAALTSKCCYKSFCDKCIRDHIISKSMCVC) adopts an RING-type; degenerate zinc-finger fold. Disordered regions lie at residues 375–408 (DLES…NNND), 459–493 (TQAP…MQWN), and 623–892 (MLRK…RSRA). At Ser-404 the chain carries Phosphoserine. The span at 623-644 (MLRKRENERRPEGGKMFRDGEN) shows a compositional bias: basic and acidic residues. The span at 647–666 (MMMNNGTSASASSINPNKSR) shows a compositional bias: polar residues. Basic and acidic residues predominate over residues 674–692 (HDYDRRRRPEKRLSPEHPP). A Nuclear localization signal motif is present at residues 693-700 (TRKNISPS). The segment covering 708–745 (ERYPDERDRQRDRERSRHQDVDREHDRTRDRRDEDRSR) has biased composition (basic and acidic residues). Positions 810–832 (SSSSTSVTDPSASASAAAAVGTS) are enriched in low complexity. At Ser-866 the chain carries Phosphoserine. Basic and acidic residues predominate over residues 875–892 (SEDKLRYSKRGKGERSRA).

The protein resides in the nucleus. It catalyses the reaction S-ubiquitinyl-[E2 ubiquitin-conjugating enzyme]-L-cysteine + [acceptor protein]-L-lysine = [E2 ubiquitin-conjugating enzyme]-L-cysteine + N(6)-ubiquitinyl-[acceptor protein]-L-lysine.. The chain is E3 ubiquitin ligase PQT3-like from Arabidopsis thaliana (Mouse-ear cress).